The chain runs to 439 residues: Damage-control phosphatase ARMT1 (439 aa).

Alanine 2 is subject to N-acetylalanine. Serine 4 carries the post-translational modification Phosphoserine. At lysine 40 the chain carries N6-acetyllysine. Residues aspartate 251 and asparagine 252 each coordinate Mn(2+). Position 251 to 252 (aspartate 251 to asparagine 252) interacts with substrate. S-adenosyl-L-methionine is bound by residues glutamate 256 and aspartate 289. Aspartate 289 is a binding site for Mn(2+). Substrate contacts are provided by residues aspartate 365 to arginine 369 and lysine 402. The Subfamily III RTxK motif motif lies at arginine 399 to lysine 402.

It belongs to the damage-control phosphatase family. Sugar phosphate phosphatase III subfamily. It depends on Mn(2+) as a cofactor. Requires Ni(2+) as cofactor. In terms of processing, automethylated.

It carries out the reaction beta-D-fructose 1-phosphate + H2O = D-fructose + phosphate. It catalyses the reaction beta-D-fructose 6-phosphate = dihydroxyacetone + D-glyceraldehyde 3-phosphate. The catalysed reaction is L-glutamyl-[protein] + S-adenosyl-L-methionine = [protein]-L-glutamate 5-O-methyl ester + S-adenosyl-L-homocysteine. Functionally, metal-dependent phosphatase that shows phosphatase activity against several substrates, including fructose-1-phosphate and fructose-6-phosphate. Its preference for fructose-1-phosphate, a strong glycating agent that causes DNA damage rather than a canonical yeast metabolite, suggests a damage-control function in hexose phosphate metabolism. Has also been shown to have O-methyltransferase activity that methylates glutamate residues of target proteins to form gamma-glutamyl methyl ester residues. Possibly methylates PCNA, suggesting it is involved in the DNA damage response. The sequence is that of Damage-control phosphatase ARMT1 from Rattus norvegicus (Rat).